Reading from the N-terminus, the 89-residue chain is Small ribosomal subunit protein uS15 (89 aa).

It belongs to the universal ribosomal protein uS15 family. In terms of assembly, part of the 30S ribosomal subunit. Forms a bridge to the 50S subunit in the 70S ribosome, contacting the 23S rRNA.

Functionally, one of the primary rRNA binding proteins, it binds directly to 16S rRNA where it helps nucleate assembly of the platform of the 30S subunit by binding and bridging several RNA helices of the 16S rRNA. In terms of biological role, forms an intersubunit bridge (bridge B4) with the 23S rRNA of the 50S subunit in the ribosome. This is Small ribosomal subunit protein uS15 from Rhodococcus erythropolis (strain PR4 / NBRC 100887).